Consider the following 90-residue polypeptide: Histone H1.M6.2 (90 aa).

A disordered region spans residues 1-90 (MSDAAVPPKK…KAVKKAPKKK (90 aa)). Residues 11–90 (ASPKKAAAKK…KAVKKAPKKK (80 aa)) are compositionally biased toward basic residues.

The protein resides in the nucleus. Its subcellular location is the chromosome. The polypeptide is Histone H1.M6.2 (Trypanosoma cruzi).